Reading from the N-terminus, the 917-residue chain is Alanine--tRNA ligase (917 aa).

Positions 615, 619, 719, and 723 each coordinate Zn(2+).

This sequence belongs to the class-II aminoacyl-tRNA synthetase family. Requires Zn(2+) as cofactor.

It localises to the cytoplasm. The catalysed reaction is tRNA(Ala) + L-alanine + ATP = L-alanyl-tRNA(Ala) + AMP + diphosphate. Catalyzes the attachment of alanine to tRNA(Ala) in a two-step reaction: alanine is first activated by ATP to form Ala-AMP and then transferred to the acceptor end of tRNA(Ala). Also edits incorrectly charged Ser-tRNA(Ala) and Gly-tRNA(Ala) via its editing domain. The polypeptide is Alanine--tRNA ligase (Thermococcus kodakarensis (strain ATCC BAA-918 / JCM 12380 / KOD1) (Pyrococcus kodakaraensis (strain KOD1))).